A 680-amino-acid chain; its full sequence is DNA-directed RNA polymerase subunit beta' (680 aa).

4 residues coordinate Zn(2+): Cys-69, Cys-71, Cys-87, and Cys-90. Mg(2+)-binding residues include Asp-489, Asp-491, and Asp-493.

This sequence belongs to the RNA polymerase beta' chain family. RpoC1 subfamily. In terms of assembly, in plastids the minimal PEP RNA polymerase catalytic core is composed of four subunits: alpha, beta, beta', and beta''. When a (nuclear-encoded) sigma factor is associated with the core the holoenzyme is formed, which can initiate transcription. The cofactor is Mg(2+). It depends on Zn(2+) as a cofactor.

It localises to the plastid. The protein localises to the chloroplast. The catalysed reaction is RNA(n) + a ribonucleoside 5'-triphosphate = RNA(n+1) + diphosphate. DNA-dependent RNA polymerase catalyzes the transcription of DNA into RNA using the four ribonucleoside triphosphates as substrates. This is DNA-directed RNA polymerase subunit beta' from Manihot esculenta (Cassava).